The chain runs to 151 residues: Testis-expressed protein 29 (151 aa).

Topologically, residues 1–56 (MEYVLEVKNSPRHLLKQFTVCDVPLYDICDYNVSRDRCQELGCCFYEGVCYKKAVP) are extracellular. The chain crosses the membrane as a helical span at residues 57-77 (IYIHVFSALIVIIAGAFVITI). Residues 78–151 (IYRVIQESRK…TITEAEETED (74 aa)) lie on the Cytoplasmic side of the membrane. The disordered stretch occupies residues 100-151 (KSSEKAELASSSSKLGLKPASPGPPSAGPSMKSDEDKDDVTGTITEAEETED). Positions 107 to 119 (LASSSSKLGLKPA) are enriched in low complexity.

It is found in the membrane. In Homo sapiens (Human), this protein is Testis-expressed protein 29 (TEX29).